The chain runs to 1366 residues: DNA-directed RNA polymerase subunit beta (1366 aa).

This sequence belongs to the RNA polymerase beta chain family. As to quaternary structure, the RNAP catalytic core consists of 2 alpha, 1 beta, 1 beta' and 1 omega subunit. When a sigma factor is associated with the core the holoenzyme is formed, which can initiate transcription.

The enzyme catalyses RNA(n) + a ribonucleoside 5'-triphosphate = RNA(n+1) + diphosphate. DNA-dependent RNA polymerase catalyzes the transcription of DNA into RNA using the four ribonucleoside triphosphates as substrates. The sequence is that of DNA-directed RNA polymerase subunit beta from Polynucleobacter asymbioticus (strain DSM 18221 / CIP 109841 / QLW-P1DMWA-1) (Polynucleobacter necessarius subsp. asymbioticus).